A 55-amino-acid polypeptide reads, in one-letter code: Large ribosomal subunit protein bL33 (55 aa).

It belongs to the bacterial ribosomal protein bL33 family.

In Wigglesworthia glossinidia brevipalpis, this protein is Large ribosomal subunit protein bL33.